The sequence spans 432 residues: Enolase (432 aa).

Q167 serves as a coordination point for (2R)-2-phosphoglycerate. Residue E209 is the Proton donor of the active site. Mg(2+)-binding residues include D246, E291, and D318. 4 residues coordinate (2R)-2-phosphoglycerate: K343, R372, S373, and K394. K343 (proton acceptor) is an active-site residue.

Belongs to the enolase family. As to quaternary structure, component of the RNA degradosome, a multiprotein complex involved in RNA processing and mRNA degradation. The cofactor is Mg(2+).

The protein resides in the cytoplasm. Its subcellular location is the secreted. The protein localises to the cell surface. It carries out the reaction (2R)-2-phosphoglycerate = phosphoenolpyruvate + H2O. It participates in carbohydrate degradation; glycolysis; pyruvate from D-glyceraldehyde 3-phosphate: step 4/5. Functionally, catalyzes the reversible conversion of 2-phosphoglycerate (2-PG) into phosphoenolpyruvate (PEP). It is essential for the degradation of carbohydrates via glycolysis. In Buchnera aphidicola subsp. Cinara cedri (strain Cc), this protein is Enolase.